The primary structure comprises 111 residues: ATP-dependent Clp protease adapter protein ClpS (111 aa).

Belongs to the ClpS family. As to quaternary structure, binds to the N-terminal domain of the chaperone ClpA.

In terms of biological role, involved in the modulation of the specificity of the ClpAP-mediated ATP-dependent protein degradation. This is ATP-dependent Clp protease adapter protein ClpS from Legionella pneumophila (strain Paris).